The following is a 196-amino-acid chain: MPIGVPKVPFRSPGEGDTSWVDIYNRLYRERLFFLGQEVDTEISNQLISLMIYLSIEKDTKDLYLFINSPGGWVISGMAIYDTMQFVRPDVQTICMGLAASIASFILVGGAITKRIAFPHARVMIHQPASSFYEAQTGEFILEAEELLKLRETITRVYVQRTGKPIWVVSEDMERDVFMSATEAQAHGIVDLVAVQ.

Residue serine 101 is the Nucleophile of the active site. Residue histidine 126 is part of the active site.

The protein belongs to the peptidase S14 family. Component of the chloroplastic Clp protease core complex.

It is found in the plastid. It localises to the chloroplast stroma. It catalyses the reaction Hydrolysis of proteins to small peptides in the presence of ATP and magnesium. alpha-casein is the usual test substrate. In the absence of ATP, only oligopeptides shorter than five residues are hydrolyzed (such as succinyl-Leu-Tyr-|-NHMec, and Leu-Tyr-Leu-|-Tyr-Trp, in which cleavage of the -Tyr-|-Leu- and -Tyr-|-Trp bonds also occurs).. Its function is as follows. Cleaves peptides in various proteins in a process that requires ATP hydrolysis. Has a chymotrypsin-like activity. Plays a major role in the degradation of misfolded proteins. The polypeptide is ATP-dependent Clp protease proteolytic subunit (Barbarea verna (Land cress)).